Consider the following 252-residue polypeptide: 5'-nucleotidase SurE (252 aa).

A divalent metal cation contacts are provided by aspartate 8, aspartate 9, serine 39, and asparagine 91.

Belongs to the SurE nucleotidase family. The cofactor is a divalent metal cation.

It is found in the cytoplasm. The enzyme catalyses a ribonucleoside 5'-phosphate + H2O = a ribonucleoside + phosphate. Its function is as follows. Nucleotidase that shows phosphatase activity on nucleoside 5'-monophosphates. This chain is 5'-nucleotidase SurE, found in Geobacter metallireducens (strain ATCC 53774 / DSM 7210 / GS-15).